A 102-amino-acid chain; its full sequence is Small ribosomal subunit protein uS10 (102 aa).

The protein belongs to the universal ribosomal protein uS10 family. Part of the 30S ribosomal subunit.

In terms of biological role, involved in the binding of tRNA to the ribosomes. This is Small ribosomal subunit protein uS10 (rpsJ) from Bacillus subtilis (strain 168).